We begin with the raw amino-acid sequence, 356 residues long: Golgi-resident adenosine 3',5'-bisphosphate 3'-phosphatase (356 aa).

An N-acetylmethionine modification is found at Met1. The Cytoplasmic portion of the chain corresponds to 1–12 (MAPMGIRLSPLG). The helical transmembrane segment at 13–33 (VAVFFLLGLGVLYHLYSGFLA) threads the bilayer. Residues 34 to 356 (GRFSLFGLGG…KLPDLEKSGH (323 aa)) lie on the Lumenal side of the membrane. A disordered region spans residues 82-104 (VRESNVLHEKSKGKTREGAEDKM). The Proton acceptor role is filled by Asp108. The Mg(2+) site is built by Glu131, Asp172, Leu174, and Asp175. The Proton acceptor role is filled by Thr177. Positions 240 and 243 each coordinate AMP. N-linked (GlcNAc...) asparagine glycosylation is present at Asn257. Residues Gly266 and Lys270 each coordinate AMP. Asp298 provides a ligand contact to Mg(2+).

The protein belongs to the inositol monophosphatase superfamily. Mg(2+) is required as a cofactor. Post-translationally, contains N-linked glycan resistant to endoglycosydase H.

Its subcellular location is the golgi apparatus. It localises to the trans-Golgi network membrane. It carries out the reaction adenosine 3',5'-bisphosphate + H2O = AMP + phosphate. Its pathway is sulfur metabolism. Its activity is regulated as follows. Strongly inhibited by lithium. In terms of biological role, exhibits 3'-nucleotidase activity toward adenosine 3',5'-bisphosphate (PAP), namely hydrolyzes adenosine 3',5'-bisphosphate into adenosine 5'-monophosphate (AMP) and a phosphate. May play a role in the formation of skeletal elements derived through endochondral ossification, possibly by clearing adenosine 3',5'-bisphosphate produced by Golgi sulfotransferases during glycosaminoglycan sulfation. Has no activity toward 3'-phosphoadenosine 5'-phosphosulfate (PAPS) or inositol phosphate (IP) substrates including I(1)P, I(1,4)P2, I(1,3,4)P3, I(1,4,5)P3 and I(1,3,4,5)P4. This Rattus norvegicus (Rat) protein is Golgi-resident adenosine 3',5'-bisphosphate 3'-phosphatase (Bpnt2).